A 1323-amino-acid chain; its full sequence is Phosphoribosylformylglycinamidine synthase (1323 aa).

Residues Gly312–Asp323, Asn391–Tyr393, and Ala691 contribute to the ATP site. Positions 692, 733, 737, and 903 each coordinate Mg(2+). An ATP-binding site is contributed by Ser905. The region spanning Val1062 to Gly1306 is the Glutamine amidotransferase type-1 domain. Cys1156 functions as the Nucleophile in the catalytic mechanism. Catalysis depends on residues His1284 and Glu1286.

In the N-terminal section; belongs to the FGAMS family.

It localises to the cytoplasm. It carries out the reaction N(2)-formyl-N(1)-(5-phospho-beta-D-ribosyl)glycinamide + L-glutamine + ATP + H2O = 2-formamido-N(1)-(5-O-phospho-beta-D-ribosyl)acetamidine + L-glutamate + ADP + phosphate + H(+). Its pathway is purine metabolism; IMP biosynthesis via de novo pathway; 5-amino-1-(5-phospho-D-ribosyl)imidazole from N(2)-formyl-N(1)-(5-phospho-D-ribosyl)glycinamide: step 1/2. Its function is as follows. Phosphoribosylformylglycinamidine synthase involved in the purines biosynthetic pathway. Catalyzes the ATP-dependent conversion of formylglycinamide ribonucleotide (FGAR) and glutamine to yield formylglycinamidine ribonucleotide (FGAM) and glutamate. The sequence is that of Phosphoribosylformylglycinamidine synthase (ade3) from Schizosaccharomyces pombe (strain 972 / ATCC 24843) (Fission yeast).